We begin with the raw amino-acid sequence, 209 residues long: Lectin (209 aa).

As to quaternary structure, homodimer; non-covalently linked.

Functionally, binds chito-oligosaccherides. Has hemagglutinating activity towards rabbit erythrocytes. The sequence is that of Lectin from Luffa acutangula (Ridged gourd).